Reading from the N-terminus, the 449-residue chain is Signal recognition particle protein (449 aa).

GTP-binding positions include 109–116, 191–195, and 249–252; these read GLQGGGKT, DTAGR, and SRID.

It belongs to the GTP-binding SRP family. SRP54 subfamily. In terms of assembly, part of the signal recognition particle protein translocation system, which is composed of SRP and FtsY. SRP is a ribonucleoprotein composed of Ffh and a 4.5S RNA molecule.

The protein localises to the cytoplasm. It carries out the reaction GTP + H2O = GDP + phosphate + H(+). In terms of biological role, involved in targeting and insertion of nascent membrane proteins into the cytoplasmic membrane. Binds to the hydrophobic signal sequence of the ribosome-nascent chain (RNC) as it emerges from the ribosomes. The SRP-RNC complex is then targeted to the cytoplasmic membrane where it interacts with the SRP receptor FtsY. Interaction with FtsY leads to the transfer of the RNC complex to the Sec translocase for insertion into the membrane, the hydrolysis of GTP by both Ffh and FtsY, and the dissociation of the SRP-FtsY complex into the individual components. In Rickettsia typhi (strain ATCC VR-144 / Wilmington), this protein is Signal recognition particle protein.